The sequence spans 527 residues: Ribosomal protein S6 kinase beta-1 (527 aa).

The interval Met-1–Met-54 is disordered. The short motif at Phe-28–Leu-32 is the TOS motif element. The span at Ile-30–Glu-46 shows a compositional bias: acidic residues. Residues Phe-91–Phe-352 form the Protein kinase domain. Residues Leu-97–Val-105 and Lys-123 contribute to the ATP site. Residue Asp-218 is the Proton acceptor of the active site. The residue at position 252 (Thr-252) is a Phosphothreonine; by PDPK1. One can recognise an AGC-kinase C-terminal domain in the interval Arg-353–Lys-423. Ser-394 is subject to Phosphoserine. Residue Thr-412 is modified to Phosphothreonine; by MTOR, NEK6 and NEK7. The autoinhibitory domain stretch occupies residues Glu-424 to Leu-527. 2 positions are modified to phosphoserine: Ser-434 and Ser-441. Thr-444 carries the post-translational modification Phosphothreonine. Residues Ser-447 and Ser-452 each carry the phosphoserine modification. At Lys-516 the chain carries N6-acetyllysine.

It belongs to the protein kinase superfamily. AGC Ser/Thr protein kinase family. S6 kinase subfamily. Interacts with PPP1R9A/neurabin-1. Interacts with RPTOR. Interacts with IRS1. Interacts with EIF3B and EIF3C. Interacts with TRAF4. Interacts with POLDIP3. Interacts (via N-terminus) with IER5. Post-translationally, phosphorylation at Thr-412 is regulated by mTORC1. The phosphorylation at this site is maintained by an agonist-dependent autophosphorylation mechanism. Activated by phosphorylation at Thr-252 by PDPK1. Dephosphorylation by PPP1CC at Thr-412 in mitochondrion.

It is found in the cytoplasm. Its subcellular location is the synapse. The protein localises to the synaptosome. The protein resides in the mitochondrion outer membrane. It localises to the mitochondrion. The enzyme catalyses L-seryl-[protein] + ATP = O-phospho-L-seryl-[protein] + ADP + H(+). The catalysed reaction is L-threonyl-[protein] + ATP = O-phospho-L-threonyl-[protein] + ADP + H(+). Inactivated by binding to URI1. Activation requires multiple phosphorylation events on serine/threonine residues. Activation appears to be first mediated by phosphorylation of multiple sites in the autoinhibitory domain, which facilitates phosphorylation at Thr-412, disrupting the autoinhibitory mechanism and allowing phosphorylation of Thr-252 by PDPK1. The active conformation of the kinase is believed to be stabilized by a mechanism involving three conserved phosphorylation sites located in the kinase domain activation loop (Thr-252) and in the AGC-kinase C-terminal domain (Ser-394 in the middle of the tail/linker region and Thr-412 within a hydrophobic motif at its end). Activated by mTORC1; isoform Alpha I and isoform Alpha II are sensitive to rapamycin, which inhibits activating phosphorylation at Thr-412. Activated by PDPK1. Its function is as follows. Serine/threonine-protein kinase that acts downstream of mTOR signaling in response to growth factors and nutrients to promote cell proliferation, cell growth and cell cycle progression. Regulates protein synthesis through phosphorylation of EIF4B, RPS6 and EEF2K, and contributes to cell survival by repressing the pro-apoptotic function of BAD. Under conditions of nutrient depletion, the inactive form associates with the EIF3 translation initiation complex. Upon mitogenic stimulation, phosphorylation by the mechanistic target of rapamycin complex 1 (mTORC1) leads to dissociation from the EIF3 complex and activation. The active form then phosphorylates and activates several substrates in the pre-initiation complex, including the EIF2B complex and the cap-binding complex component EIF4B. Also controls translation initiation by phosphorylating a negative regulator of EIF4A, PDCD4, targeting it for ubiquitination and subsequent proteolysis. Promotes initiation of the pioneer round of protein synthesis by phosphorylating POLDIP3/SKAR. In response to IGF1, activates translation elongation by phosphorylating EEF2 kinase (EEF2K), which leads to its inhibition and thus activation of EEF2. Also plays a role in feedback regulation of mTORC2 by mTORC1 by phosphorylating MAPKAP1/SIN1, MTOR and RICTOR, resulting in the inhibition of mTORC2 and AKT1 signaling. Also involved in feedback regulation of mTORC1 and mTORC2 by phosphorylating DEPTOR. Mediates cell survival by phosphorylating the pro-apoptotic protein BAD and suppressing its pro-apoptotic function. Phosphorylates mitochondrial URI1 leading to dissociation of a URI1-PPP1CC complex. The free mitochondrial PPP1CC can then dephosphorylate RPS6KB1 at Thr-412, which is proposed to be a negative feedback mechanism for the RPS6KB1 anti-apoptotic function. Mediates TNF-alpha-induced insulin resistance by phosphorylating IRS1 at multiple serine residues, resulting in accelerated degradation of IRS1. In cells lacking functional TSC1-2 complex, constitutively phosphorylates and inhibits GSK3B. May be involved in cytoskeletal rearrangement through binding to neurabin. Phosphorylates and activates the pyrimidine biosynthesis enzyme CAD, downstream of MTOR. Following activation by mTORC1, phosphorylates EPRS and thereby plays a key role in fatty acid uptake by adipocytes and also most probably in interferon-gamma-induced translation inhibition. The polypeptide is Ribosomal protein S6 kinase beta-1 (RPS6KB1) (Bos taurus (Bovine)).